Here is a 211-residue protein sequence, read N- to C-terminus: tRNA (guanine-N(7)-)-methyltransferase (211 aa).

4 residues coordinate S-adenosyl-L-methionine: Glu-44, Asp-69, Asp-96, and Asp-118. Residue Asp-118 is part of the active site. Substrate is bound at residue Lys-122. Residues 124–129 (RHEKRR) are interaction with RNA. Substrate-binding positions include Asp-154 and 191–194 (TEYE).

It belongs to the class I-like SAM-binding methyltransferase superfamily. TrmB family.

The catalysed reaction is guanosine(46) in tRNA + S-adenosyl-L-methionine = N(7)-methylguanosine(46) in tRNA + S-adenosyl-L-homocysteine. The protein operates within tRNA modification; N(7)-methylguanine-tRNA biosynthesis. Its function is as follows. Catalyzes the formation of N(7)-methylguanine at position 46 (m7G46) in tRNA. This chain is tRNA (guanine-N(7)-)-methyltransferase, found in Streptococcus mutans serotype c (strain ATCC 700610 / UA159).